We begin with the raw amino-acid sequence, 130 residues long: Transcription antitermination protein NusB (130 aa).

This sequence belongs to the NusB family.

Involved in transcription antitermination. Required for transcription of ribosomal RNA (rRNA) genes. Binds specifically to the boxA antiterminator sequence of the ribosomal RNA (rrn) operons. The protein is Transcription antitermination protein NusB of Bacillus velezensis (strain DSM 23117 / BGSC 10A6 / LMG 26770 / FZB42) (Bacillus amyloliquefaciens subsp. plantarum).